The following is a 218-amino-acid chain: MAQYSQTLRSSGFTSTVGLTDIEGAKTVARRIFENYDKGRKGRIENTDCVPMITEAYKSFNSFFAPSSDDIKAYHRVLDRNGDGIVTYQDIEELCIRYLTGTTVQRTIVTEEKVKKSSKPKYNPEVEAKLDVARRLFKRYDKDGSGQLQDDEIAGLLKDTYAEMGMSNFTPTKEDVKIWLQMADTNSDGSVSLEEYEDLIIKSLQKAGIRVEKQSLVF.

EF-hand domains lie at 24-59 (GAKT…AYKS), 66-101 (PSSD…YLTG), 128-163 (AKLD…TYAE), and 171-206 (PTKE…SLQK). The Ca(2+) site is built by Asp-37, Arg-43, Asp-48, Asp-79, Asn-81, Asp-83, Asp-90, Asp-141, Asp-143, Ser-145, Gln-147, Glu-152, Asp-184, Asn-186, Asp-188, Ser-190, and Glu-195.

Its function is as follows. Expected to play a crucial role in calcium-dependent regulation of ciliary movement. This Tetrahymena thermophila protein is 25 kDa calcium-binding protein.